The primary structure comprises 107 residues: ESAT-6-like protein EsxD (107 aa).

It belongs to the WXG100 family. CFP-10 subfamily.

It localises to the secreted. This chain is ESAT-6-like protein EsxD, found in Mycobacterium tuberculosis (strain ATCC 25618 / H37Rv).